A 353-amino-acid polypeptide reads, in one-letter code: Neutral protease 2 homolog AO090001000135 (353 aa).

The signal sequence occupies residues 1 to 19 (MRFISVSSLLLALAPALNA). Positions 20–176 (VPVEVAGSAQ…TQAVKILERR (157 aa)) are excised as a propeptide. Intrachain disulfides connect Cys-182–Cys-254 and Cys-261–Cys-279. Residue His-304 participates in Zn(2+) binding. The active site involves Glu-305. Residues His-308 and Asp-319 each contribute to the Zn(2+) site.

It belongs to the peptidase M35 family. The cofactor is Zn(2+).

The protein resides in the secreted. It carries out the reaction Preferential cleavage of bonds with hydrophobic residues in P1'. Also 3-Asn-|-Gln-4 and 8-Gly-|-Ser-9 bonds in insulin B chain.. Functionally, secreted metalloproteinase that allows assimilation of proteinaceous substrates. Shows high activities on basic nuclear substrates such as histone and protamine. The polypeptide is Neutral protease 2 homolog AO090001000135 (Aspergillus oryzae (strain ATCC 42149 / RIB 40) (Yellow koji mold)).